A 244-amino-acid chain; its full sequence is tRNA (guanine-N(7)-)-methyltransferase (244 aa).

Positions 75, 100, 127, and 150 each coordinate S-adenosyl-L-methionine. Asp-150 is a catalytic residue. Residues Lys-154, Asp-186, and 223–226 (TRFE) each bind substrate.

Belongs to the class I-like SAM-binding methyltransferase superfamily. TrmB family.

The catalysed reaction is guanosine(46) in tRNA + S-adenosyl-L-methionine = N(7)-methylguanosine(46) in tRNA + S-adenosyl-L-homocysteine. The protein operates within tRNA modification; N(7)-methylguanine-tRNA biosynthesis. In terms of biological role, catalyzes the formation of N(7)-methylguanine at position 46 (m7G46) in tRNA. This Xylella fastidiosa (strain M23) protein is tRNA (guanine-N(7)-)-methyltransferase.